Reading from the N-terminus, the 121-residue chain is Large ribosomal subunit protein uL14 (121 aa).

The protein belongs to the universal ribosomal protein uL14 family. As to quaternary structure, part of the 50S ribosomal subunit. Forms a cluster with proteins L3 and L19. In the 70S ribosome, L14 and L19 interact and together make contacts with the 16S rRNA in bridges B5 and B8.

Functionally, binds to 23S rRNA. Forms part of two intersubunit bridges in the 70S ribosome. The chain is Large ribosomal subunit protein uL14 from Phocaeicola vulgatus (strain ATCC 8482 / DSM 1447 / JCM 5826 / CCUG 4940 / NBRC 14291 / NCTC 11154) (Bacteroides vulgatus).